Reading from the N-terminus, the 382-residue chain is MIOREX complex component 5 (382 aa).

The transit peptide at 1 to 12 (MRRTFSQLATRL) directs the protein to the mitochondrion.

Associates with the mitochondrial ribosome.

It localises to the mitochondrion. Functionally, component of MIOREX complexes, large expressome-like assemblies of ribosomes with factors involved in all the steps of post-transcriptional gene expression. The chain is MIOREX complex component 5 from Saccharomyces cerevisiae (strain ATCC 204508 / S288c) (Baker's yeast).